The primary structure comprises 367 residues: MSLYGLFTLATSYLPSVGGGAALAAKAQLGKARSLYVPDLFAGILSGEPTRNPHEEEVGRASEEWTKKLVKMDKRTAKILTKANFAYLVSLAAPLADEEAFRMGVDWCIWAFVFDDQFDEGPMRDKGIEAAREIIDMLATQDDTCALVDPVVHPLQYMFQSVWQRFKARNPSPGLERRWKYTHKRCLFAILKQVDATQRKITLDVDLDDYMETRRHSIGAYSLFAVVEWAHAIKAPEEAMNHPSVQTCERVAADLTWLVNDVLSYKKDLAFGVEHNLTRLLMRQGLTEQGAMDKLGQLMESNQRDWEDAIAELPHWEDEETNKEVRRYLDACAAVGRANLHWSFKSGRYLNAEQGRKVRETRIMDLP.

A signal peptide spans 1-24 (MSLYGLFTLATSYLPSVGGGAALA). The Mg(2+) site is built by D115, N260, and S264. Residues 115-119 (DDQFD) carry the DDXXD motif motif. N276 is a glycosylation site (N-linked (GlcNAc...) asparagine).

This sequence belongs to the terpene synthase family. Mg(2+) is required as a cofactor.

The catalysed reaction is (2E,6E,10E)-geranylgeranyl diphosphate = cycloaraneosene + diphosphate. It participates in antibiotic biosynthesis. Cycloaraneosene synthase; part of the gene cluster that mediates the biosynthesis of sordarin and hypoxysordarin, glycoside antibiotics with a unique tetracyclic diterpene aglycone structure. First, the geranylgeranyl diphosphate synthase sdnC constructs GGDP from farnesyl diphosphate and isopentenyl diphosphate. The diterpene cyclase sdnA then catalyzes the cyclization of GGDP to afford cycloaraneosene. Cycloaraneosene is then hydroxylated four times by the putative cytochrome P450 monooxygenases sdnB, sdnE, sdnF and sdnH to give a hydroxylated cycloaraneosene derivative such as cycloaraneosene-8,9,13,19-tetraol. Although the order of the hydroxylations is unclear, at least C8, C9 and C13 of the cycloaraneosene skeleton are hydroxylated before the sordaricin formation. Dehydration of the 13-hydroxy group of the hydroxylated cycloaraneosene derivative might be catalyzed by an unassigned hypothetical protein such as sdnG and sdnP to construct the cyclopentadiene moiety. The FAD-dependent oxidoreductase sdnN is proposed to catalyze the oxidation at C9 of the hydroxylated cycloaraneosene derivative and also catalyze the Baeyer-Villiger oxidation to give the lactone intermediate. The presumed lactone intermediate would be hydrolyzed to give an acrolein moiety and a carboxylate moiety. Then, [4+2]cycloaddition would occur between the acrolein moiety and the cyclopentadiene moiety to give sordaricin. SdnN might also be involved in the [4+2]cycloaddition after the hypothesized oxidation to accommodate the oxidized product and prompt the [4+2]cycloaddition. GDP-6-deoxy-D-altrose may be biosynthesized from GDP-D-mannose by the putative GDP-mannose-4,6-dehydratase sdnI and the short-chain dehydrogenase sdnK. The glycosyltransferase sdnJ catalyzes the attachment of 6-deoxy-D-altrose onto the 19-hydroxy group of sordaricin to give 4'-O-demethylsordarin. The methyltransferase sdnD would complete the biosynthesis of sordarin. Sordarin can be further modified into hypoxysordarin. The unique acyl chain at the 3'-hydroxy group of hypoxysordarin would be constructed by an iterative type I PKS sdnO and the trans-acting polyketide methyltransferase sdnL. SdnL would be responsible for the introduction of an alpha-methyl group of the polyketide chain. Alternatively, the beta-lactamase-like protein sdnR might be responsible for the cleavage and transfer of the polyketide chain from the PKS sdnO to sordarin. Two putative cytochrome P450 monooxygenases, sdnQ and sdnT, might catalyze the epoxidations of the polyketide chain to complete the biosynthesis of hypoxysordarin. Transcriptional regulators sdnM and sdnS are presumably encoded for the transcriptional regulation of the expression of the sdn gene cluster. This Sordaria araneosa (Pleurage araneosa) protein is Cycloaraneosene synthase sdnA.